The sequence spans 1109 residues: Protein phosphatase 1 regulatory subunit 3A (1109 aa).

Phosphoserine; by GSK3 occurs at positions 40 and 44. The residue at position 48 (S48) is a Phosphoserine; by PKA and ISPK. Phosphoserine is present on S51. T58 carries the phosphothreonine modification. A PP1-binding motif motif is present at residues 64 to 67 (RRVS). The residue at position 67 (S67) is a Phosphoserine; by PKA. The region spanning 124–232 (QLQVQKAMLE…NNNGTNYTLV (109 aa)) is the CBM21 domain. The span at 236 to 251 (KEPEPEPGKPLEEAPS) shows a compositional bias: basic and acidic residues. Disordered stretches follow at residues 236 to 278 (KEPE…NFEN), 340 to 424 (GKNT…SDGS), 436 to 455 (DDNA…CSFP), and 493 to 517 (YFKK…KEKR). 3 stretches are compositionally biased toward polar residues: residues 340–352 (GKNT…SNIP), 360–384 (KNQS…SAES), and 396–406 (YSSGNESSHQP). Residue S843 is modified to Phosphoserine. Disordered regions lie at residues 945–985 (SATE…RKEK) and 1011–1048 (SREN…ETQD). Polar residues predominate over residues 951-963 (YNCSPTRETQGQP). 2 stretches are compositionally biased toward basic and acidic residues: residues 966–985 (KPEE…RKEK) and 1011–1034 (SREN…KEFE). Over residues 1035–1048 (SSASSSLPVQETQD) the composition is skewed to polar residues. A helical transmembrane segment spans residues 1066 to 1086 (FLLFLMFLVTVYHYDLMIGLA).

Interacts with PPP1CC catalytic subunit of PP1, and associates with glycogen. In terms of processing, phosphorylation at Ser-48 by ISPK stimulates the dephosphorylation of glycogen synthase and phosphorylase kinase. In terms of tissue distribution, skeletal muscle, diaphragm and cardiac muscle.

The protein resides in the membrane. Seems to act as a glycogen-targeting subunit for PP1. PP1 is essential for cell division, and participates in the regulation of glycogen metabolism, muscle contractility and protein synthesis. Plays an important role in glycogen synthesis but is not essential for insulin activation of glycogen synthase. The chain is Protein phosphatase 1 regulatory subunit 3A (PPP1R3A) from Oryctolagus cuniculus (Rabbit).